The sequence spans 363 residues: Ribosomal RNA large subunit methyltransferase M (363 aa).

Residues Ser-194, 227-230, Asp-246, Asp-266, and Asp-284 contribute to the S-adenosyl-L-methionine site; that span reads CPGG. The active-site Proton acceptor is the Lys-313.

The protein belongs to the class I-like SAM-binding methyltransferase superfamily. RNA methyltransferase RlmE family. RlmM subfamily. In terms of assembly, monomer.

The protein resides in the cytoplasm. It carries out the reaction cytidine(2498) in 23S rRNA + S-adenosyl-L-methionine = 2'-O-methylcytidine(2498) in 23S rRNA + S-adenosyl-L-homocysteine + H(+). In terms of biological role, catalyzes the 2'-O-methylation at nucleotide C2498 in 23S rRNA. The chain is Ribosomal RNA large subunit methyltransferase M from Haemophilus influenzae (strain 86-028NP).